The primary structure comprises 327 residues: Phage tubulin-like protein (327 aa).

GTP contacts are provided by residues 14–15 (GA) and 107–109 (ASG). The segment at 303–327 (KANMRKRQSTLDVDDQATSSGLVFD) is disordered. Polar residues predominate over residues 318–327 (QATSSGLVFD).

It belongs to the FtsZ family. PhuZ subfamily. In terms of assembly, homomultimer. Polymerizes in a strictly GTP-dependent manner.

It localises to the host cytoplasm. The catalysed reaction is GTP + H2O = GDP + phosphate + H(+). Its activity is regulated as follows. The non-hydrolyzable GTP analog GMPCPP stabilizes filaments, which never disassemble. Its function is as follows. A tubulin-like GTPase that forms filaments, which are required for positioning viral DNA and capsids in the middle of the host cell for optimal replication. The motor component of a partition system which pushes phage DNA (encased by protein gp105) to the center of the bacterial host cell. Also required for movement of phage capsids to the vicinity of the viral DNA and rotation of the encased viral DNA at midcell. Forms filaments during the lytic phase, which position phage DNA at the center of the bacterial host cell. Filaments have a three-stranded intertwined architecture and form a spindle-like cytoskeleton within the infected cell. Has GTPase activity. Filaments grow at the plus end and depolymerize at the minus end, a process called treadmilling, and switch from growing in a polar manner to catastrophic depolymerization, i.e. they display dynamic instability, like tubulin. In infected host cells the filament ends close to the cell pole are relatively stable, while the other end near the phage DNA is highly dynamic. Both capsid movement and DNA rotation probably require treadmilling. The sequence is that of Phage tubulin-like protein from Pseudomonas phage phiKZ.